The following is a 392-amino-acid chain: Putative nickel insertion protein (392 aa).

It belongs to the LarC family.

This chain is Putative nickel insertion protein, found in Methanothrix thermoacetophila (strain DSM 6194 / JCM 14653 / NBRC 101360 / PT) (Methanosaeta thermophila).